A 671-amino-acid chain; its full sequence is DNA ligase (671 aa).

NAD(+) contacts are provided by residues 31-35, 80-81, and Glu110; these read DAEYD and SL. Lys112 functions as the N6-AMP-lysine intermediate in the catalytic mechanism. 4 residues coordinate NAD(+): Arg133, Glu167, Lys283, and Lys307. 4 residues coordinate Zn(2+): Cys401, Cys404, Cys419, and Cys424. A BRCT domain is found at 587-671; that stretch reads EEELVFAGKT…YLPDEGGLNE (85 aa).

Belongs to the NAD-dependent DNA ligase family. LigA subfamily. Requires Mg(2+) as cofactor. Mn(2+) is required as a cofactor.

The enzyme catalyses NAD(+) + (deoxyribonucleotide)n-3'-hydroxyl + 5'-phospho-(deoxyribonucleotide)m = (deoxyribonucleotide)n+m + AMP + beta-nicotinamide D-nucleotide.. DNA ligase that catalyzes the formation of phosphodiester linkages between 5'-phosphoryl and 3'-hydroxyl groups in double-stranded DNA using NAD as a coenzyme and as the energy source for the reaction. It is essential for DNA replication and repair of damaged DNA. The sequence is that of DNA ligase from Listeria monocytogenes serotype 4b (strain CLIP80459).